We begin with the raw amino-acid sequence, 139 residues long: Cystatin-11 (139 aa).

The signal sequence occupies residues 1 to 28 (MAAGSWKATRLLLAILVALVAFSYQVKR). 2 disulfide bridges follow: Cys-94–Cys-102 and Cys-115–Cys-135. Residue Asn-134 is glycosylated (N-linked (GlcNAc...) asparagine).

It belongs to the cystatin family. Expressed in epididymis, where it localizes to the proximal caput and also part of the midcaput. Not detected in other tissues tested.

It localises to the secreted. In terms of biological role, has antibacterial activity against the Gram-negative bacteria E.coli. May play a role in sperm maturation and fertilization. The protein is Cystatin-11 of Mus musculus (Mouse).